Reading from the N-terminus, the 250-residue chain is 2-C-methyl-D-erythritol 4-phosphate cytidylyltransferase (250 aa).

It belongs to the IspD/TarI cytidylyltransferase family. IspD subfamily.

It carries out the reaction 2-C-methyl-D-erythritol 4-phosphate + CTP + H(+) = 4-CDP-2-C-methyl-D-erythritol + diphosphate. It functions in the pathway isoprenoid biosynthesis; isopentenyl diphosphate biosynthesis via DXP pathway; isopentenyl diphosphate from 1-deoxy-D-xylulose 5-phosphate: step 2/6. Functionally, catalyzes the formation of 4-diphosphocytidyl-2-C-methyl-D-erythritol from CTP and 2-C-methyl-D-erythritol 4-phosphate (MEP). The polypeptide is 2-C-methyl-D-erythritol 4-phosphate cytidylyltransferase (Streptomyces avermitilis (strain ATCC 31267 / DSM 46492 / JCM 5070 / NBRC 14893 / NCIMB 12804 / NRRL 8165 / MA-4680)).